The primary structure comprises 38 residues: Large ribosomal subunit protein bL36 (38 aa).

This sequence belongs to the bacterial ribosomal protein bL36 family.

The polypeptide is Large ribosomal subunit protein bL36 (Synechococcus sp. (strain JA-2-3B'a(2-13)) (Cyanobacteria bacterium Yellowstone B-Prime)).